A 388-amino-acid chain; its full sequence is Succinate--CoA ligase [ADP-forming] subunit beta (388 aa).

An ATP-grasp domain is found at 9–244 (KSLFAEYGLP…PSQDDAREAH (236 aa)). ATP contacts are provided by residues lysine 46, 53-55 (GRG), glutamate 99, threonine 102, and glutamate 107. Mg(2+) is bound by residues asparagine 199 and aspartate 213. Substrate contacts are provided by residues asparagine 264 and 321–323 (GIV).

It belongs to the succinate/malate CoA ligase beta subunit family. In terms of assembly, heterotetramer of two alpha and two beta subunits. It depends on Mg(2+) as a cofactor.

The catalysed reaction is succinate + ATP + CoA = succinyl-CoA + ADP + phosphate. It catalyses the reaction GTP + succinate + CoA = succinyl-CoA + GDP + phosphate. It participates in carbohydrate metabolism; tricarboxylic acid cycle; succinate from succinyl-CoA (ligase route): step 1/1. Succinyl-CoA synthetase functions in the citric acid cycle (TCA), coupling the hydrolysis of succinyl-CoA to the synthesis of either ATP or GTP and thus represents the only step of substrate-level phosphorylation in the TCA. The beta subunit provides nucleotide specificity of the enzyme and binds the substrate succinate, while the binding sites for coenzyme A and phosphate are found in the alpha subunit. This chain is Succinate--CoA ligase [ADP-forming] subunit beta, found in Shewanella baltica (strain OS195).